A 29-amino-acid chain; its full sequence is SQXPQSETDYSQLSGEWNTIYGAASNIXK.

It belongs to the calycin superfamily. Lipocalin family.

The protein localises to the secreted. The chain is Dander allergen Equ c 2.0101 from Equus caballus (Horse).